We begin with the raw amino-acid sequence, 514 residues long: Peptide chain release factor 3 (514 aa).

Residues 8–268 (KKRRTFAIIS…TFLEFAPEPH (261 aa)) enclose the tr-type G domain. GTP is bound by residues 17-24 (SHPDAGKT), 85-89 (DTPGH), and 139-142 (NKLD).

The protein belongs to the TRAFAC class translation factor GTPase superfamily. Classic translation factor GTPase family. PrfC subfamily.

It localises to the cytoplasm. Functionally, increases the formation of ribosomal termination complexes and stimulates activities of RF-1 and RF-2. It binds guanine nucleotides and has strong preference for UGA stop codons. It may interact directly with the ribosome. The stimulation of RF-1 and RF-2 is significantly reduced by GTP and GDP, but not by GMP. The protein is Peptide chain release factor 3 of Streptococcus pyogenes serotype M28 (strain MGAS6180).